The chain runs to 634 residues: MTEAVSDVTLAKASPKPNSFWTLALGSIGVVYGDIGTSPLYALKESLTAASAGGALTQEMIFGVLSLMLWTLLIIVTLKYVLLIMRADNHGEGGTLTLMALLQSVMRRRFAAISLLGMAGAALFYGDAIITPAISVLSAVEGLKLVAPGFDPYILPLSMAILVGLFLVQSWGTAAVATWFGPLMLIWFGLMAVAGTANLMDNLHILGAVNPIYGIDFLLHHGHAGLLALGAVFLTVTGAEALYADMGHFGRRPIQVAWLVLVFPALALCYLGQGAMLLSHPERLENPFFLLFPDWALLPMVWIATGATIIASQAVISGAYSLTQQAIQLGLLPRMEIRRTSETEKGQIYIPRANWLLLIAVLYLVFAFKSSSALASAYGIAVTGTMVLTSIMAFFVMRKCWHWPAAVATAIIVPFLIIDLIFLMANLLKIVDGGWIPLMIGVGLMGVMVTWRRGSKIVARKTVRDEIDLNDFIASISVSSSISRVRGTAVFLTGNPNSTPTSLMHNLKHNKVLHEKNVILRVATEDVPRVSEDERLSYEPVNDSFAKITIRFGYMETPDVPKALVACRPLGFAFDMMSTSFFLSRRVIRQANPSEMPRWQGLLFVNMAKWSDDASLYFKIPTGRAVEVGMQITV.

Helical transmembrane passes span 20–40 (FWTL…TSPL), 64–84 (VLSL…VLLI), 110–130 (FAAI…DAII), 148–168 (PGFD…LFLV), 174–194 (AAVA…MAVA), 224–244 (AGLL…ALYA), 258–278 (WLVL…AMLL), 290–310 (LLFP…ATII), 348–368 (IYIP…VFAF), 377–397 (AYGI…FFVM), 405–425 (AAVA…FLMA), and 430–450 (IVDG…VMVT).

It belongs to the HAK/KUP transporter (TC 2.A.72) family.

The protein localises to the cell inner membrane. The enzyme catalyses K(+)(in) + H(+)(in) = K(+)(out) + H(+)(out). Transport of potassium into the cell. Likely operates as a K(+):H(+) symporter. This Rhodopseudomonas palustris (strain ATCC BAA-98 / CGA009) protein is Probable potassium transport system protein Kup 2.